The chain runs to 236 residues: ATP synthase subunit a (236 aa).

A run of 5 helical transmembrane segments spans residues 18-38 (STVMMLLVAAIIVFLIAFIST), 79-99 (GITLIMFIAVSNLLGLPFSIV), 112-132 (DPTVTMTLATMILVLSHFYGV), 174-194 (IYAGEILLGLLAGLASSGAVG), and 205-227 (WQGFSIFIGFIQAFIFTMLTMVY).

This sequence belongs to the ATPase A chain family. In terms of assembly, F-type ATPases have 2 components, CF(1) - the catalytic core - and CF(0) - the membrane proton channel. CF(1) has five subunits: alpha(3), beta(3), gamma(1), delta(1), epsilon(1). CF(0) has three main subunits: a(1), b(2) and c(9-12). The alpha and beta chains form an alternating ring which encloses part of the gamma chain. CF(1) is attached to CF(0) by a central stalk formed by the gamma and epsilon chains, while a peripheral stalk is formed by the delta and b chains.

It is found in the cell membrane. Functionally, key component of the proton channel; it plays a direct role in the translocation of protons across the membrane. The sequence is that of ATP synthase subunit a from Lysinibacillus sphaericus (strain C3-41).